A 307-amino-acid chain; its full sequence is Oxygen-dependent coproporphyrinogen-III oxidase (307 aa).

Position 99 (serine 99) interacts with substrate. 2 residues coordinate a divalent metal cation: histidine 103 and histidine 113. Histidine 113 acts as the Proton donor in catalysis. A substrate-binding site is contributed by 115 to 117 (NVR). Histidine 152 and histidine 182 together coordinate a divalent metal cation. Positions 247 to 282 (YVEFNLVFDRGTLFGLQSGGRTESILMSMPPVANWR) are important for dimerization. 265–267 (GGR) is a binding site for substrate.

This sequence belongs to the aerobic coproporphyrinogen-III oxidase family. As to quaternary structure, homodimer. A divalent metal cation is required as a cofactor.

The protein resides in the cytoplasm. The catalysed reaction is coproporphyrinogen III + O2 + 2 H(+) = protoporphyrinogen IX + 2 CO2 + 2 H2O. It functions in the pathway porphyrin-containing compound metabolism; protoporphyrin-IX biosynthesis; protoporphyrinogen-IX from coproporphyrinogen-III (O2 route): step 1/1. Involved in the heme biosynthesis. Catalyzes the aerobic oxidative decarboxylation of propionate groups of rings A and B of coproporphyrinogen-III to yield the vinyl groups in protoporphyrinogen-IX. In Burkholderia cenocepacia (strain ATCC BAA-245 / DSM 16553 / LMG 16656 / NCTC 13227 / J2315 / CF5610) (Burkholderia cepacia (strain J2315)), this protein is Oxygen-dependent coproporphyrinogen-III oxidase.